Here is a 364-residue protein sequence, read N- to C-terminus: DNA replication and repair protein RecF (364 aa).

30–37 contacts ATP; sequence GNNAQGKT.

This sequence belongs to the RecF family.

The protein localises to the cytoplasm. The RecF protein is involved in DNA metabolism; it is required for DNA replication and normal SOS inducibility. RecF binds preferentially to single-stranded, linear DNA. It also seems to bind ATP. The sequence is that of DNA replication and repair protein RecF from Streptococcus uberis (strain ATCC BAA-854 / 0140J).